The sequence spans 377 residues: uncharacterized protein (377 aa).

Residues 21–43 (YFISFSALFLIAYMFVAAVPLGA) form a helical membrane-spanning segment.

It localises to the membrane. This is an uncharacterized protein from Treponema pallidum (strain Nichols).